The chain runs to 497 residues: Trichoplein keratin filament-binding protein (497 aa).

Coiled coils occupy residues 67 to 140, 166 to 271, and 327 to 479; these read HCEK…LLYE, ATQK…ELGR, and MKQV…AKTM. The segment at 72-457 is interaction with keratin proteins; it reads KEEKRKILEL…WEAARQEEEE (386 aa). A disordered region spans residues 167-188; sequence TQKEEKKQQEATEKQENKRLEN. Positions 168–188 are enriched in basic and acidic residues; the sequence is QKEEKKQQEATEKQENKRLEN. The tract at residues 258–424 is trichohyalin/plectin homology domain; sequence RQMAALRRKT…KQLAQRAKEE (167 aa). The tract at residues 441-497 is disordered; it reads AERQGQEWEAARQEEEEEEEARQAEEHSNALLQQEAKTMAEKGYQPKLHGHLRIAWD. Over residues 444 to 453 the composition is skewed to basic and acidic residues; sequence QGQEWEAARQ. Over residues 488 to 497 the composition is skewed to basic residues; the sequence is LHGHLRIAWD.

It belongs to the TCHP family. In terms of assembly, interacts specifically with keratin proteins including, KRT5, KRT6A, KRT8, KRT14, KRT16 and KRT18. Interacts with KCTD17. In terms of processing, ubiquitinated. Ubiquitination by the BCR(KCTD17) E3 ubiquitin ligase complex results in proteasomal degradation, and induces ciliogenesis. As to expression, expressed in all tissues examined, including brain, liver, small intestine, large intestine, lung and heart. Found concentrated in tubular structures within hepatocytes, and in the apical cortical region and desmosomes of the apical junctional domain in enterocytes of the small intestine. In the hair follicle, localized at the outer root sheath. Also expressed in blood vessels (at protein level).

The protein resides in the cytoplasm. The protein localises to the cytoskeleton. Its subcellular location is the cell membrane. It is found in the mitochondrion. It localises to the microtubule organizing center. The protein resides in the centrosome. In terms of biological role, tumor suppressor which has the ability to inhibit cell growth and be pro-apoptotic during cell stress. May act as a 'capping' or 'branching' protein for keratin filaments in the cell periphery. May regulate K8/K18 filament and desmosome organization mainly at the apical or peripheral regions of simple epithelial cells. Is a negative regulator of ciliogenesis. The polypeptide is Trichoplein keratin filament-binding protein (Mus musculus (Mouse)).